We begin with the raw amino-acid sequence, 430 residues long: Tol-Pal system protein TolB (430 aa).

Positions 1–21 are cleaved as a signal peptide; sequence MKQAFRVALGFFLLWASVLHA.

Belongs to the TolB family. The Tol-Pal system is composed of five core proteins: the inner membrane proteins TolA, TolQ and TolR, the periplasmic protein TolB and the outer membrane protein Pal. They form a network linking the inner and outer membranes and the peptidoglycan layer.

The protein localises to the periplasm. Its function is as follows. Part of the Tol-Pal system, which plays a role in outer membrane invagination during cell division and is important for maintaining outer membrane integrity. TolB occupies a key intermediary position in the Tol-Pal system because it communicates directly with both membrane-embedded components, Pal in the outer membrane and TolA in the inner membrane. The chain is Tol-Pal system protein TolB from Sodalis glossinidius (strain morsitans).